We begin with the raw amino-acid sequence, 312 residues long: Ribosomal RNA small subunit methyltransferase H (312 aa).

S-adenosyl-L-methionine is bound by residues 35 to 37 (GGH), aspartate 54, phenylalanine 81, aspartate 100, and glutamine 107.

This sequence belongs to the methyltransferase superfamily. RsmH family.

The protein resides in the cytoplasm. The catalysed reaction is cytidine(1402) in 16S rRNA + S-adenosyl-L-methionine = N(4)-methylcytidine(1402) in 16S rRNA + S-adenosyl-L-homocysteine + H(+). Functionally, specifically methylates the N4 position of cytidine in position 1402 (C1402) of 16S rRNA. The protein is Ribosomal RNA small subunit methyltransferase H of Campylobacter jejuni subsp. jejuni serotype O:2 (strain ATCC 700819 / NCTC 11168).